An 831-amino-acid polypeptide reads, in one-letter code: Replication restart protein PriA (831 aa).

The Helicase ATP-binding domain occupies 304 to 471; the sequence is VLPLQGYHQV…HRHQNDPQRH (168 aa). Residue 317–324 participates in ATP binding; the sequence is GVTGSGKT. A DEAH box motif is present at residues 413-416; the sequence is DEEH. Positions 537, 540, 546, 549, 568, 571, 581, and 584 each coordinate Zn(2+). One can recognise a Helicase C-terminal domain in the interval 575 to 735; it reads EIQPKVCPEC…ELPQREMLNY (161 aa).

The protein belongs to the helicase family. PriA subfamily. As to quaternary structure, component of the replication restart primosome. Requires Zn(2+) as cofactor.

It carries out the reaction Couples ATP hydrolysis with the unwinding of duplex DNA by translocating in the 3'-5' direction.. It catalyses the reaction ATP + H2O = ADP + phosphate + H(+). Functionally, initiates the restart of stalled replication forks, which reloads the replicative helicase on sites other than the origin of replication. Recognizes and binds to abandoned replication forks and remodels them to uncover a helicase loading site. Promotes assembly of the primosome at these replication forks. The protein is Replication restart protein PriA of Synechocystis sp. (strain ATCC 27184 / PCC 6803 / Kazusa).